The chain runs to 133 residues: Ribosomal silencing factor RsfS (133 aa).

This sequence belongs to the Iojap/RsfS family. Interacts with ribosomal protein uL14 (rplN).

It is found in the cytoplasm. Its function is as follows. Functions as a ribosomal silencing factor. Interacts with ribosomal protein uL14 (rplN), blocking formation of intersubunit bridge B8. Prevents association of the 30S and 50S ribosomal subunits and the formation of functional ribosomes, thus repressing translation. In Zymomonas mobilis subsp. mobilis (strain ATCC 31821 / ZM4 / CP4), this protein is Ribosomal silencing factor RsfS.